A 425-amino-acid polypeptide reads, in one-letter code: MLSIKWIRENQELFDEKLSKRFIEPMSSKIAMLDGEKRKITSLIQEFQHARKVKSKILGNMASKSGEEFEAIQRDVKHINEKLEELEQDLNNNNELNELLNMLPNIPDEEVPYGMDESMNKLVRTYGETNPNALNKQHFELGTKLNLMDFEQTAKISGARFVTLKGDLAKLERALINFMIDVHTKEFNFFEMSPPVLVRDNAMYNSGQLPKFAEESFATTNGYRLIPTAEVFLVNIVADTIIPREKLPMRYVAYTPCFRSEAGSSGRDTRGMIRLHQFGKVELVSITTPEESKHEHEYITNSSETILQKLNLPYRVMLLCTGDMGFAAKKTYDIEVWLPGQKQYREIASCSNCGDFQARRMKARYKEFGSNETTLVHTLNASGLPIGRTMVAILENYQNEDGSITIPDVLINYMGGLQKITTHGE.

228–230 lines the L-serine pocket; sequence TAE. Residue 259-261 coordinates ATP; the sequence is RSE. Glu282 is an L-serine binding site. 346 to 349 contacts ATP; the sequence is EIAS. Ser382 lines the L-serine pocket.

Belongs to the class-II aminoacyl-tRNA synthetase family. Type-1 seryl-tRNA synthetase subfamily. Homodimer. The tRNA molecule binds across the dimer.

The protein resides in the cytoplasm. The catalysed reaction is tRNA(Ser) + L-serine + ATP = L-seryl-tRNA(Ser) + AMP + diphosphate + H(+). It carries out the reaction tRNA(Sec) + L-serine + ATP = L-seryl-tRNA(Sec) + AMP + diphosphate + H(+). It functions in the pathway aminoacyl-tRNA biosynthesis; selenocysteinyl-tRNA(Sec) biosynthesis; L-seryl-tRNA(Sec) from L-serine and tRNA(Sec): step 1/1. Functionally, catalyzes the attachment of serine to tRNA(Ser). Is also able to aminoacylate tRNA(Sec) with serine, to form the misacylated tRNA L-seryl-tRNA(Sec), which will be further converted into selenocysteinyl-tRNA(Sec). This chain is Serine--tRNA ligase, found in Rickettsia akari (strain Hartford).